A 200-amino-acid polypeptide reads, in one-letter code: Cysteine-rich venom protein VAR8 (200 aa).

Positions 1–22 (MILLKLYLTLAAILCQSRGTTS) are cleaved as a signal peptide. The region spanning 41–169 (NKHNDLRRTV…PLKYFLVCQY (129 aa)) is the SCP domain. Intrachain disulfides connect cysteine 77–cysteine 156, cysteine 95–cysteine 170, cysteine 151–cysteine 167, and cysteine 189–cysteine 196.

This sequence belongs to the CRISP family. Contains 8 disulfide bonds. As to expression, expressed by the venom gland.

The protein localises to the secreted. Functionally, blocks ryanodine receptors, and potassium channels. This is Cysteine-rich venom protein VAR8 from Varanus acanthurus (Ridge-tailed monitor).